Reading from the N-terminus, the 61-residue chain is Large ribosomal subunit protein eL37 (61 aa).

The Zn(2+) site is built by Cys-19, Cys-22, Cys-34, and Cys-37. Residues 19-37 (CRRCGRNAYNVSKHYCAAC) form a C4-type zinc finger.

This sequence belongs to the eukaryotic ribosomal protein eL37 family. The cofactor is Zn(2+).

Binds to the 23S rRNA. This chain is Large ribosomal subunit protein eL37, found in Saccharolobus islandicus (strain L.S.2.15 / Lassen #1) (Sulfolobus islandicus).